Consider the following 465-residue polypeptide: uncharacterized protein (465 aa).

Residues 6–91 form the RAMA domain; sequence NVTLSNLIDF…LKLKREYLFR (86 aa). 2 disordered regions span residues 95–377 and 392–465; these read TGKN…SNNQ and YNQQ…KSKS. Residues 117 to 137 are compositionally biased toward low complexity; the sequence is PQQQQQQQQQQQQQQQQQQQP. Over residues 156–169 the composition is skewed to acidic residues; sequence ETSDQDIDNDDDDA. A compositionally biased stretch (low complexity) spans 177–190; that stretch reads TTTTTTTTTTTTTT. Residues 208 to 220 show a composition bias toward basic and acidic residues; the sequence is PKEKKKEKKENIL. Residues 214-242 adopt a coiled-coil conformation; it reads EKKENILTKKKQQSLQYQQQLQLLQRQNS. Positions 226-263 are enriched in low complexity; the sequence is QSLQYQQQLQLLQRQNSPPSVSPSSSTSTSSSTSSPAS. Residues 264-294 are compositionally biased toward polar residues; sequence NQIFNSFGPNSQNHNQYGINYNSQQHQPQQY. A compositionally biased stretch (low complexity) spans 295–376; that stretch reads NNNNNNNNNN…NNNINNNSNN (82 aa). The span at 392–407 shows a compositional bias: polar residues; sequence YNQQNPPKHQYPNNFL. Residues 424-442 show a composition bias toward low complexity; that stretch reads NQSQNQNQNQNQNQNQNQK. Residues 443 to 465 show a composition bias toward basic residues; it reads SKSKSKSKSKFKSKSKSKSKSKS.

This is an uncharacterized protein from Dictyostelium discoideum (Social amoeba).